Reading from the N-terminus, the 346-residue chain is N-acetyl-gamma-glutamyl-phosphate reductase (346 aa).

The active site involves Cys150.

The protein belongs to the NAGSA dehydrogenase family. Type 1 subfamily.

It localises to the cytoplasm. It catalyses the reaction N-acetyl-L-glutamate 5-semialdehyde + phosphate + NADP(+) = N-acetyl-L-glutamyl 5-phosphate + NADPH + H(+). It functions in the pathway amino-acid biosynthesis; L-arginine biosynthesis; N(2)-acetyl-L-ornithine from L-glutamate: step 3/4. Catalyzes the NADPH-dependent reduction of N-acetyl-5-glutamyl phosphate to yield N-acetyl-L-glutamate 5-semialdehyde. This Alkaliphilus metalliredigens (strain QYMF) protein is N-acetyl-gamma-glutamyl-phosphate reductase.